The chain runs to 118 residues: Vesicle-associated membrane protein 1 (118 aa).

The span at 1 to 15 shows a compositional bias: low complexity; the sequence is MSAPAQPPAEGTEGA. The interval 1 to 38 is disordered; it reads MSAPAQPPAEGTEGAAPGGGPPGPPPNTTSNRRLQQTQ. The Cytoplasmic segment spans residues 1-96; that stretch reads MSAPAQPPAE…KRKYWWKNCK (96 aa). Positions 28–38 are enriched in polar residues; the sequence is TTSNRRLQQTQ. In terms of domain architecture, v-SNARE coiled-coil homology spans 33-93; that stretch reads RLQQTQAQVE…AKLKRKYWWK (61 aa). At Ser63 the chain carries Phosphoserine. Residues 97–116 form a helical; Anchor for type IV membrane protein membrane-spanning segment; sequence MMIMLGAICAIIVVVIVIYI. The Vesicular segment spans residues 117 to 118; the sequence is FT.

It belongs to the synaptobrevin family. Interacts with VAPA and VAPB. Post-translationally, (Microbial infection) Targeted and hydrolyzed by C.botulinum neurotoxin type D (BoNT/D, botD) which hydrolyzes the 61-Lys-|-Leu-62 bond and inhibits neurotransmitter release. This is a poor substrate for BoNT/D, high concentrations are required to cleave it in vitro. In terms of processing, (Microbial infection) Targeted and hydrolyzed by C.botulinum neurotoxin type F (BoNT/F, botF) which hydrolyzes the 60-Gln-|-Lys-61 bond and inhibits neurotransmitter release. In terms of tissue distribution, expressed in brain and spleen (at protein level). Isoform 1 expressed at very high level in brain. Even higher level found in spinal cord. Isoform 3 expressed in kidney, spleen and liver. Isoforms 2 and 3 expressed in osteoblasts of trabecular bone. Also expressed in heart.

The protein localises to the cytoplasmic vesicle. It localises to the secretory vesicle. Its subcellular location is the synaptic vesicle membrane. The protein resides in the synapse. It is found in the synaptosome. The protein localises to the cytoplasmic vesicle membrane. It localises to the mitochondrion outer membrane. Its function is as follows. Involved in the targeting and/or fusion of transport vesicles to their target membrane. The chain is Vesicle-associated membrane protein 1 (Vamp1) from Rattus norvegicus (Rat).